Reading from the N-terminus, the 217-residue chain is Adenylate kinase (217 aa).

10–15 (GAGKGT) lines the ATP pocket. The tract at residues 30 to 59 (STGDMLRAQVKAGTALGLEAKKHMDAGGLV) is NMP. AMP is bound by residues Thr31, Arg36, 57–59 (GLV), 85–88 (GFPR), and Gln92. Residues 122–159 (GRRAHLASGRTYHVKFNPPKVEGIDDVTGEPLVQRDDD) form an LID region. ATP is bound by residues Arg123 and 132 to 133 (TY). Residues Arg156 and Arg167 each coordinate AMP. Gly203 contacts ATP.

It belongs to the adenylate kinase family. Monomer.

Its subcellular location is the cytoplasm. The catalysed reaction is AMP + ATP = 2 ADP. It participates in purine metabolism; AMP biosynthesis via salvage pathway; AMP from ADP: step 1/1. In terms of biological role, catalyzes the reversible transfer of the terminal phosphate group between ATP and AMP. Plays an important role in cellular energy homeostasis and in adenine nucleotide metabolism. This chain is Adenylate kinase, found in Dechloromonas aromatica (strain RCB).